Reading from the N-terminus, the 328-residue chain is Reticulocalbin-3 (328 aa).

An N-terminal signal peptide occupies residues 1–20 (MMWRPSVLLLLLLLRHGAQG). A disordered region spans residues 19-49 (QGKPSPDAGPHGQGRVHQAAPLSDAPHDDAH). 6 EF-hand domains span residues 75 to 112 (ESQARLGRIVDRMDRAGDGDGWVSLAELRAWIAHTQQR), 113 to 148 (HIRDSVSAAWDTYDTDRDGRVGWEELRNATYGHYAP), 163 to 198 (KMLARDERRFRVADQDGDSMATREELTAFLHPEEFP), 200 to 235 (MRDIVIAETLEDLDRNKDGYVQVEEYIADLYSAEPG), 241 to 276 (WVQTERQQFRDFRDLNKDGHLDGSEVGHWVLPPAQD), and 277 to 312 (QPLVEANHLLHESDTDKDGRLSKAEILGNWNMFVGS). Ca(2+)-binding residues include Asp92, Asp94, Trp96, Glu101, Asp126, Asp128, Asp130, Arg132, and Glu137. A glycan (N-linked (GlcNAc...) asparagine) is linked at Asn140. Ca(2+) is bound by residues Asp176, Asp178, Asp180, Met182, Glu187, Asp213, Asn215, Asp217, Tyr219, Glu224, Asp254, Asn256, Asp258, His260, Glu265, Asp290, Asp292, Asp294, Arg296, and Glu301. Residues 325–328 (HDEL) carry the Prevents secretion from ER motif.

The protein belongs to the CREC family. Interacts with PCSK6 (immature form including the propeptide); probably involved in the maturation and the secretion of PCSK6. In terms of processing, degraded by PCSK6 and other endoproteases including FURIN and PCSK5. Post-translationally, N-glycosylated. In terms of tissue distribution, widely expressed.

The protein resides in the endoplasmic reticulum lumen. Probable molecular chaperone assisting protein biosynthesis and transport in the endoplasmic reticulum. Required for the proper biosynthesis and transport of pulmonary surfactant-associated protein A/SP-A, pulmonary surfactant-associated protein D/SP-D and the lipid transporter ABCA3. By regulating both the proper expression and the degradation through the endoplasmic reticulum-associated protein degradation pathway of these proteins plays a crucial role in pulmonary surfactant homeostasis. Has an anti-fibrotic activity by negatively regulating the secretion of type I and type III collagens. This calcium-binding protein also transiently associates with immature PCSK6 and regulates its secretion. The protein is Reticulocalbin-3 of Homo sapiens (Human).